We begin with the raw amino-acid sequence, 98 residues long: ATP synthase subunit c (98 aa).

2 helical membrane-spanning segments follow: residues 27 to 47 (ALAL…GLGL) and 73 to 93 (IIGA…FFVV).

It belongs to the ATPase C chain family. In terms of assembly, F-type ATPases have 2 components, F(1) - the catalytic core - and F(0) - the membrane proton channel. F(1) has five subunits: alpha(3), beta(3), gamma(1), delta(1), epsilon(1). F(0) has three main subunits: a(1), b(2) and c(10-14). The alpha and beta chains form an alternating ring which encloses part of the gamma chain. F(1) is attached to F(0) by a central stalk formed by the gamma and epsilon chains, while a peripheral stalk is formed by the delta and b chains.

It localises to the cell inner membrane. In terms of biological role, f(1)F(0) ATP synthase produces ATP from ADP in the presence of a proton or sodium gradient. F-type ATPases consist of two structural domains, F(1) containing the extramembraneous catalytic core and F(0) containing the membrane proton channel, linked together by a central stalk and a peripheral stalk. During catalysis, ATP synthesis in the catalytic domain of F(1) is coupled via a rotary mechanism of the central stalk subunits to proton translocation. Its function is as follows. Key component of the F(0) channel; it plays a direct role in translocation across the membrane. A homomeric c-ring of between 10-14 subunits forms the central stalk rotor element with the F(1) delta and epsilon subunits. This chain is ATP synthase subunit c, found in Protochlamydia amoebophila (strain UWE25).